A 360-amino-acid chain; its full sequence is Mannose-1-phosphate guanyltransferase beta-A (360 aa).

The protein belongs to the transferase hexapeptide repeat family.

The catalysed reaction is alpha-D-mannose 1-phosphate + GTP + H(+) = GDP-alpha-D-mannose + diphosphate. The protein operates within nucleotide-sugar biosynthesis; GDP-alpha-D-mannose biosynthesis; GDP-alpha-D-mannose from alpha-D-mannose 1-phosphate (GTP route): step 1/1. In Xenopus laevis (African clawed frog), this protein is Mannose-1-phosphate guanyltransferase beta-A (gmppb-a).